Here is a 329-residue protein sequence, read N- to C-terminus: Biotin synthase (329 aa).

The Radical SAM core domain occupies 48-278 (FLGTGVDLCS…DRKIAVCGGR (231 aa)). [4Fe-4S] cluster contacts are provided by Cys-66, Cys-70, and Cys-73. Residues Ser-143 and Cys-203 each coordinate [2Fe-2S] cluster.

It belongs to the radical SAM superfamily. Biotin synthase family. In terms of assembly, homodimer. [4Fe-4S] cluster serves as cofactor. Requires [2Fe-2S] cluster as cofactor.

The enzyme catalyses (4R,5S)-dethiobiotin + (sulfur carrier)-SH + 2 reduced [2Fe-2S]-[ferredoxin] + 2 S-adenosyl-L-methionine = (sulfur carrier)-H + biotin + 2 5'-deoxyadenosine + 2 L-methionine + 2 oxidized [2Fe-2S]-[ferredoxin]. The protein operates within cofactor biosynthesis; biotin biosynthesis; biotin from 7,8-diaminononanoate: step 2/2. In terms of biological role, catalyzes the conversion of dethiobiotin (DTB) to biotin by the insertion of a sulfur atom into dethiobiotin via a radical-based mechanism. The sequence is that of Biotin synthase from Geobacter sulfurreducens (strain ATCC 51573 / DSM 12127 / PCA).